The primary structure comprises 444 residues: MLTTASSADILTLSPARGLRGQVSIPGDKSISHRALMLGSLAEGETVIHGLSLGEDPRSTAACFRALGADIPELNSECVRIQGVGLDRLQEPAEVLDAGNSGTTLRLMLGILAGQAGRFFAVTGDRSLRSRPMGRVVEPLRQMGANIWGRAGGNLAPLAVQGGSLKGIHYHSPVASAQVKSCLLLAGLLAEGTTQVTEPALSRDHSERMLRAFGAEISVDVAAKTVAVVGGSRLVGQTVQVPGDISSAAFWLVAASIVPESELLLQDVGLNPTRTGVLQVLQEMGADIQVEKRREVAGEPLGDLRVRSARLRGCSIAGDLIPTLIDEIPVLAVAAAFAEGTTVIRDAAELRVKESDRLAAIAQELSRMGAQVTEYPDGLEIKGGIPLQGAEVDSHADHRIAMSLMVAALAAQGSTTLRGADCARISYPDFIPTLQRLINPSSAS.

3-phosphoshikimate is bound by residues Lys29, Ser30, and Arg34. Phosphoenolpyruvate is bound at residue Lys29. Residues Gly102 and Arg131 each contribute to the phosphoenolpyruvate site. Residues Ser176, Gln178, Asp326, and Lys353 each coordinate 3-phosphoshikimate. Residue Gln178 coordinates phosphoenolpyruvate. Catalysis depends on Asp326, which acts as the Proton acceptor. Arg357 and Arg399 together coordinate phosphoenolpyruvate.

Belongs to the EPSP synthase family. Monomer.

The protein resides in the cytoplasm. It catalyses the reaction 3-phosphoshikimate + phosphoenolpyruvate = 5-O-(1-carboxyvinyl)-3-phosphoshikimate + phosphate. It functions in the pathway metabolic intermediate biosynthesis; chorismate biosynthesis; chorismate from D-erythrose 4-phosphate and phosphoenolpyruvate: step 6/7. Its function is as follows. Catalyzes the transfer of the enolpyruvyl moiety of phosphoenolpyruvate (PEP) to the 5-hydroxyl of shikimate-3-phosphate (S3P) to produce enolpyruvyl shikimate-3-phosphate and inorganic phosphate. The protein is 3-phosphoshikimate 1-carboxyvinyltransferase of Synechococcus sp. (strain JA-3-3Ab) (Cyanobacteria bacterium Yellowstone A-Prime).